Consider the following 113-residue polypeptide: uncharacterized protein (113 aa).

Residues 78 to 113 form a disordered region; that stretch reads YCNRGSERTNQGNRGSAPSKILLPRTIADPFRGGPE.

This is an uncharacterized protein from Halobacterium phage phiH (Bacteriophage phi-H).